We begin with the raw amino-acid sequence, 81 residues long: GYKHQCRDRCYGTCGTSCKYGASRPSCACALHGGYCCVARPYHYPYPHPRPVPLPAPAPRPAPHYPVHHPKWPHWRPHYKA.

Expressed in oviduct, where expression levels are higher in uterine sections than in tuba sections. No expression detected in small intestine and liver (at protein level).

Its subcellular location is the nucleus. In Podarcis siculus (Italian wall lizard), this protein is Tissue- and phase-specific nuclear protein.